The primary structure comprises 623 residues: Serine/threonine-protein kinase nrc-2 (623 aa).

The disordered stretch occupies residues 1–215 (MPSTKNANGE…GLGALPPPIR (215 aa)). Basic and acidic residues-rich tracts occupy residues 27–36 (SKDHKDRDAH) and 170–180 (LSKEPLEESKD). Residues 199–209 (LAAPDADGLGA) are compositionally biased toward low complexity. A Protein kinase domain is found at 242–532 (FDKIKLIGKG…ASDIKTHPFF (291 aa)). ATP contacts are provided by residues 248–256 (IGKGDVGKV) and Lys-271. The active-site Proton acceptor is Asp-367. Residues 569-596 (VDISGSRQMGLKGEPLESGMVTPGENAV) are disordered.

This sequence belongs to the protein kinase superfamily. Ser/Thr protein kinase family. KIN82 subfamily.

It carries out the reaction L-seryl-[protein] + ATP = O-phospho-L-seryl-[protein] + ADP + H(+). The catalysed reaction is L-threonyl-[protein] + ATP = O-phospho-L-threonyl-[protein] + ADP + H(+). In terms of biological role, controls entry of the cell into the asexual developmental program. Required to repress entry into the conidiation program. The sequence is that of Serine/threonine-protein kinase nrc-2 (nrc-2) from Neurospora crassa (strain ATCC 24698 / 74-OR23-1A / CBS 708.71 / DSM 1257 / FGSC 987).